The chain runs to 320 residues: Aspartate carbamoyltransferase catalytic subunit (320 aa).

Carbamoyl phosphate-binding residues include Arg-68 and Thr-69. An L-aspartate-binding site is contributed by Lys-96. 3 residues coordinate carbamoyl phosphate: Arg-118, His-148, and Gln-151. L-aspartate-binding residues include Arg-181 and Arg-236. Positions 277 and 278 each coordinate carbamoyl phosphate.

Belongs to the aspartate/ornithine carbamoyltransferase superfamily. ATCase family. As to quaternary structure, heterododecamer (2C3:3R2) of six catalytic PyrB chains organized as two trimers (C3), and six regulatory PyrI chains organized as three dimers (R2).

It carries out the reaction carbamoyl phosphate + L-aspartate = N-carbamoyl-L-aspartate + phosphate + H(+). It participates in pyrimidine metabolism; UMP biosynthesis via de novo pathway; (S)-dihydroorotate from bicarbonate: step 2/3. In terms of biological role, catalyzes the condensation of carbamoyl phosphate and aspartate to form carbamoyl aspartate and inorganic phosphate, the committed step in the de novo pyrimidine nucleotide biosynthesis pathway. The chain is Aspartate carbamoyltransferase catalytic subunit from Paracidovorax citrulli (strain AAC00-1) (Acidovorax citrulli).